A 510-amino-acid chain; its full sequence is Inositol-3-phosphate synthase (510 aa).

24 residues coordinate NAD(+): Gly70, Gly71, Asn72, Asn73, Asp143, Ile180, Gln190, Arg193, Thr230, Ala231, Asn232, Thr233, Gly281, Ser282, Asp306, Ser309, Asn340, Asn341, Asp342, Lys355, Gly393, Asp394, Asp422, and Ser423.

This sequence belongs to the myo-inositol 1-phosphate synthase family. NAD(+) is required as a cofactor.

The protein resides in the cytoplasm. Its subcellular location is the cytosol. The protein localises to the nucleus. The catalysed reaction is D-glucose 6-phosphate = 1D-myo-inositol 3-phosphate. Its pathway is polyol metabolism; myo-inositol biosynthesis; myo-inositol from D-glucose 6-phosphate: step 1/2. Its function is as follows. Key enzyme in myo-inositol biosynthesis pathway that catalyzes the conversion of glucose 6-phosphate to 1-myo-inositol 1-phosphate in a NAD-dependent manner. This Hordeum vulgare (Barley) protein is Inositol-3-phosphate synthase.